Here is a 512-residue protein sequence, read N- to C-terminus: MATDIDMLIDLGLDLSDSDLDEDPPEPAESRRDDLESDSSGECSSSDEDMEDPHGEDGPEPILDAARPAVRPSRPEDPGVPSTQTPRPTERQGPNDPQPAPHSVWSRLGARRPSCSPEQHGGKVARLQPPPTKAQPARGGRRGRRRGRGRGGPGAADGLSDPRRRAPRTNRNPGGPRPGAGWTDGPGAPHGEAWRGSEQPDPPGGQRTRGVRQAPPPLMTLAIAPPPADPRAPAPERKAPAADTIDATTRLVLRSISERAAVDRISESFGRSAQVMHDPFGGQPFPAANSPWAPVLAGQGGPFDAETRRVSWETLVAHGPSLYRTFAGNPRAASTAKAMRDCVLRQENFIEALASADETLAWCKMCIHHNLPLRPQDPIIGTTAAVLDNLATRLRPFLQCYLKARGLCGLDELCSRRRLADIKDIASFVFVILARLANRVERGVAEIDYATLGVGVGEKMHFYLPGACMAGLIEILDTHRQECSSRVCELTASHIVAPPYVHGKYFYCNSLF.

Low complexity predominate over residues 1 to 15 (MATDIDMLIDLGLDL). The tract at residues 1 to 243 (MATDIDMLID…APERKAPAAD (243 aa)) is disordered. The Nuclear export signal signature appears at 5–17 (IDMLIDLGLDLSD). 2 positions are modified to phosphoserine; by host: serine 16 and serine 18. 2 stretches are compositionally biased toward acidic residues: residues 16–26 (SDSDLDEDPPE) and 35–51 (LESD…EDME). The segment at 104–112 (VWSRLGARR) is interaction with host ALYREF. The Nuclear localization signal motif lies at 110-138 (ARRPSCSPEQHGGKVARLQPPPTKAQPAR). Serine 114 carries the phosphoserine; by host modification. The residue at position 138 (arginine 138) is a Dimethylated arginine; by host. Positions 138–152 (RGGRRGRRRGRGRGG) are RGG-box. Residues 139 to 149 (GGRRGRRRGRG) are compositionally biased toward basic residues. Residue arginine 148 is modified to Omega-N-methylarginine; by host. Dimethylated arginine; by host is present on arginine 150. Positions 214 to 233 (APPPLMTLAIAPPPADPRAP) are enriched in pro residues. Zn(2+)-binding residues include cysteine 400, histidine 479, cysteine 483, and cysteine 488. The CHC2-type zinc finger occupies 400–488 (CYLKARGLCG…HRQECSSRVC (89 aa)). Residues 500–512 (YVHGKYFYCNSLF) are important for homodimerization.

It belongs to the HHV-1 ICP27 protein family. As to quaternary structure, homodimer. Interacts with host RBP1; this interaction facilitates the RNA polymerase recruitment to viral transcription sites. Interacts (via the RGG box) with host ALYREF/THOC4; this interaction recruits ALYREF to viral replication compartments and probably directs viral mRNA to the TAP/NFX1 pathway. Interacts with host ALYREF2. Interacts (via the RGG box) with host SRPK1; this interaction relocalizes SRPK1 to the nucleus and seems to alter its activity. Interacts with ICP4; this interaction modulates ICP4 DNA-binding activity. Interacts with host NXF1; this interaction allows efficient export of HHV-1 early and late transcripts. Methylated within the RGG box possibly by host PRMT1. When hypomethylated, ICP27 is exported to the cytoplasm earlier and more rapidly. In terms of processing, phosphorylated.

The protein localises to the host cytoplasm. It localises to the host nucleus. In terms of biological role, multifunctional regulator of the expression of viral genes that contributes to the shutoff of host protein synthesis and mediates nuclear export of viral intronless mRNAs. Early in infection, this immediate early (EI) protein mediates the inhibition of cellular splicing. This results in the accumulation of unprocessed 3'end pre-mRNAs which can't be exported from the nucleus. Cellular protein synthesis is thereby shut off early after virus infection. Later in the infection, it helps recruit cellular RNA polymerase II to viral replication sites and promotes the nuclear export of viral intronless mRNAs by interacting with mRNAs and host NXF1/TAP. ICP27 binds to NUP62 which may provide facilitated viral mRNA export and may indirectly compete with some host cell transport receptors for binding and inhibit cellular nucleocytoplasmic transport pathways. Also stimulates translation of viral transcripts. Repression of host gene expression blocks the cell cycle at the G1 phase and prevents apoptosis. Seems to silence the 3' splice site of the promyelocytic leukemia (PML) intron 7a, thereby switching PML isoforms from PML-II to PML-V. This could be linked to the accelerated mRNA export induced by ICP27 which might not provide sufficient time for PML pre-mRNA to be spliced in the nucleus. The sequence is that of mRNA export factor from Homo sapiens (Human).